Here is a 227-residue protein sequence, read N- to C-terminus: Zinc finger protein 511 (227 aa).

3 consecutive C2H2-type zinc fingers follow at residues 80–105 (FTCQ…HMMH), 107–130 (NTCS…LEWH), and 144–169 (YQCL…VRLH). A disordered region spans residues 180-204 (PKTNRGPAMPAAADAATRAPTDDSD). A compositionally biased stretch (low complexity) spans 186 to 198 (PAMPAAADAATRA).

Belongs to the krueppel C2H2-type zinc-finger protein family.

Its subcellular location is the nucleus. Functionally, may be involved in transcriptional regulation. The polypeptide is Zinc finger protein 511 (Znf511) (Mus musculus (Mouse)).